The sequence spans 110 residues: UPF0235 protein Mpop_2087 (110 aa).

This sequence belongs to the UPF0235 family.

The polypeptide is UPF0235 protein Mpop_2087 (Methylorubrum populi (strain ATCC BAA-705 / NCIMB 13946 / BJ001) (Methylobacterium populi)).